We begin with the raw amino-acid sequence, 178 residues long: Ribosome maturation factor RimP (178 aa).

This sequence belongs to the RimP family.

It is found in the cytoplasm. Its function is as follows. Required for maturation of 30S ribosomal subunits. The polypeptide is Ribosome maturation factor RimP (Streptococcus pyogenes serotype M1).